The sequence spans 629 residues: Mitochondrial Rho GTPase 1 (629 aa).

The Cytoplasmic portion of the chain corresponds to 1–600 (MSTAVRICVC…PRSEEPPADR (600 aa)). A Miro 1 domain is found at 2 to 170 (STAVRICVCG…FYLCQKAVTH (169 aa)). GTP-binding positions include 11-18 (GDEGTGKS), 59-63 (DTSAR), and 115-118 (NKSD). EF-hand domains follow at residues 186 to 221 (ACVD…SFDK) and 306 to 341 (AGYR…TPGL). Ca(2+) is bound by residues Asp199, Asp201, Asp203, Tyr205, Glu210, Asp319, Asp321, Asp323, and Glu330. The Miro 2 domain occupies 421-585 (RNVVLCYILG…FVALAEAATN (165 aa)). Residues 430–437 (GSSGAGKS), 466–470 (ELQGG), and 535–538 (LKAD) contribute to the GTP site. A helical; Anchor for type IV membrane protein transmembrane segment spans residues 601–621 (ASLYMALGATACAALAAFMIW). The Mitochondrial intermembrane portion of the chain corresponds to 622-629 (RRSTSNAA).

It belongs to the mitochondrial Rho GTPase family.

The protein resides in the mitochondrion outer membrane. Mitochondrial GTPase involved in mitochondrial trafficking. Probably involved in control of anterograde transport of mitochondria and their subcellular distribution. The sequence is that of Mitochondrial Rho GTPase 1 (gem-1) from Neurospora crassa (strain ATCC 24698 / 74-OR23-1A / CBS 708.71 / DSM 1257 / FGSC 987).